The sequence spans 180 residues: MAALLMPRRNKGMRTRLGCLSHKSDSCSDFTAILPDKPNRALKRLSTEEATRWADSFDVLLSHKYGVAAFRAFLKTEFSEENLEFWLACEEFKKTRSTAKLVSKAHRIFEEFVDVQAPREVNIDFQTREATRKNLQEPSLTCFDQAQGKVHSLMEKDSYPRFLRSKMYLDLLSQSQRRLS.

Serine 26 carries the post-translational modification Phosphoserine. The RGS domain maps to 56–171 (SFDVLLSHKY…FLRSKMYLDL (116 aa)).

In terms of assembly, interacts with GNAO1. Interacts with GNAI3.

The protein localises to the cell membrane. The protein resides in the membrane. It is found in the perikaryon. It localises to the cell projection. Its subcellular location is the dendrite. The protein localises to the nucleus. Its function is as follows. Regulates G protein-coupled receptor signaling cascades, including signaling via muscarinic acetylcholine receptor CHRM2 and dopamine receptor DRD2. Inhibits signal transduction by increasing the GTPase activity of G protein alpha subunits, thereby driving them into their inactive GDP-bound form. Modulates the activity of potassium channels that are activated in response to DRD2 and CHRM2 signaling. The chain is Regulator of G-protein signaling 8 (RGS8) from Homo sapiens (Human).